The chain runs to 150 residues: Male-specific protein scotti (150 aa).

The interval Pro60–Phe84 is disordered. N-linked (GlcNAc...) asparagine glycosylation occurs at Asn131.

This sequence belongs to the male-specific scotti family.

Post-meiotically transcribed gene that has a role in late spermiogenesis; required for actin cone progression during spermatid individualization. The chain is Male-specific protein scotti from Drosophila yakuba (Fruit fly).